The following is a 385-amino-acid chain: Protein pelota homolog (385 aa).

A Glycyl lysine isopeptide (Lys-Gly) (interchain with G-Cter in SUMO2) cross-link involves residue K162. Phosphoserine occurs at positions 374, 380, 381, and 382.

It belongs to the eukaryotic release factor 1 family. Pelota subfamily. Component of the Pelota-HBS1L complex, also named Dom34-Hbs1 complex, composed of PELO and HBS1L. Interacts with PINK1. Interacts with ABCE1. Interacts with CNOT4. A divalent metal cation is required as a cofactor. As to expression, ubiquitously expressed.

The protein localises to the cytoplasm. Functionally, component of the Pelota-HBS1L complex, a complex that recognizes stalled ribosomes and triggers the No-Go Decay (NGD) pathway. In the Pelota-HBS1L complex, PELO recognizes ribosomes stalled at the 3' end of an mRNA and engages stalled ribosomes by destabilizing mRNA in the mRNA channel. Following mRNA extraction from stalled ribosomes by the SKI complex, the Pelota-HBS1L complex promotes recruitment of ABCE1, which drives the disassembly of stalled ribosomes, followed by degradation of damaged mRNAs as part of the NGD pathway. As part of the PINK1-regulated signaling, upon mitochondrial damage is recruited to the ribosome/mRNA-ribonucleoprotein complex associated to mitochondrial outer membrane thereby enabling the recruitment of autophagy receptors and induction of mitophagy. The chain is Protein pelota homolog from Mus musculus (Mouse).